The following is a 525-amino-acid chain: Ribonuclease III domain-containing protein RNC1, chloroplastic (525 aa).

Residues 1–28 (MGPPAMAFQALTLTPLPFSLHSSSRRVR) constitute a chloroplast transit peptide. RNase III domains lie at 125–271 (LLEA…LCFG) and 403–503 (EHPR…CVYG).

In terms of assembly, interacts with RNA. Part of large ribonucleo-protein particles that contain CAF1 and/or CAF2.

The protein resides in the plastid. It localises to the chloroplast stroma. Binds specific group II introns in chloroplasts and facilitates their splicing. Acts on both subgroup IIA and subgroup IIB introns. The substrates of the subgroup II also require the CRM domain proteins CAF1 or CAF2. Binds both single-stranded and double-stranded RNA non-specifically, but lacks endonuclease activity. Required for plastid ribosome biogenesis. The chain is Ribonuclease III domain-containing protein RNC1, chloroplastic from Zea mays (Maize).